A 382-amino-acid chain; its full sequence is MKALHFGAGNIGRGFIGKLLADAGIQLTFADVNQVVLDALNARHSYQVHVVGENEQVDTVSGVNAVSSIGDDVVDLIAHVDLITTAVGPVVLERIAPAIAKGLVKRKAQGVDAPLNIIACENMVRGTTQLKGHVMNALPEDAKAWVEEHVGFVDSAVDRIVPPSASATNDPLEVTVETFSEWIVDKTQFKGALPNIPGMELTDNLMAFVERKLFTLNTGHAITAYLGKLAGHQTIRDAILDESIRAVVKGAMEESGAVLIKRYGFDADKHAAYIQKILGRFENPYLKDDVERVGRQPLRKLSAGDRLIKPLLGTLEYGLPHVNLVKGIAAAMHFRSDEDPQAQELAALITEKGPQAALAQISGLDANSDVVAEAVNAYNATK.

NAD(+) is bound at residue 3 to 14 (ALHFGAGNIGRG).

This sequence belongs to the mannitol dehydrogenase family.

The catalysed reaction is D-mannitol 1-phosphate + NAD(+) = beta-D-fructose 6-phosphate + NADH + H(+). The chain is Mannitol-1-phosphate 5-dehydrogenase from Salmonella paratyphi A (strain ATCC 9150 / SARB42).